The sequence spans 776 residues: Photosystem I P700 chlorophyll a apoprotein A1 (776 aa).

Helical transmembrane passes span 76 to 99 (IFSAHFGHLAIVFIWMSGAFFHGA), 162 to 185 (LMALATGALIMAALVLHGGIFHYH), 201 to 225 (LQHHQIGLFGLGSLGWTGHLIHVAN), 309 to 327 (VAHHHLAWAVFLMFGGHVY), 368 to 391 (WHAQLAVNLACIGSGSIVVAHHMY), 407 to 433 (LGLFTHHMWIGGLMICGAAAHAGIAVI), 455 to 477 (AIISHLNWVCMFLGFHSFGLYIH), and 557 to 575 (LMIHHIHAFTIHVTCLILL). [4Fe-4S] cluster is bound by residues Cys-599 and Cys-608. 2 helical membrane passes run 615 to 636 (HVFLGLFWMYNSLSMVIFYFSW) and 690 to 712 (LSGYGLLFLGGHFVWAFSLMFLF). His-701 is a binding site for divinylchlorophyll a'. Residues Met-709 and Tyr-717 each coordinate divinyl chlorophyll a. Trp-718 lines the phylloquinone pocket. The chain crosses the membrane as a helical span at residues 750–770 (AVGVTHFLFGGIVTTWAFFHA).

It belongs to the PsaA/PsaB family. As to quaternary structure, the PsaA/B heterodimer binds the P700 chlorophyll special pair and subsequent electron acceptors. PSI consists of a core antenna complex that captures photons, and an electron transfer chain that converts photonic excitation into a charge separation. The cyanobacterial PSI reaction center is composed of one copy each of PsaA,B,C,D,E,F,I,J,K,L,M and X, and forms trimeric complexes. Requires PSI electron transfer chain: 5 divinyl chlorophyll a, 1 divinyl chlorophyll a', 2 phylloquinones and 3 4Fe-4S clusters. PSI core antenna: 90 divinyl chlorophyll a, 22 carotenoids, 3 phospholipids and 1 galactolipid. P700 is a divinyl chlorophyll a/divinyl chlorophyll a' dimer, A0 is one or more chlorophyll divinyl a, A1 is one or both phylloquinones and FX is a shared 4Fe-4S iron-sulfur center. as cofactor.

The protein resides in the cellular thylakoid membrane. The enzyme catalyses reduced [plastocyanin] + hnu + oxidized [2Fe-2S]-[ferredoxin] = oxidized [plastocyanin] + reduced [2Fe-2S]-[ferredoxin]. In terms of biological role, psaA and PsaB bind P700, the primary electron donor of photosystem I (PSI), as well as the electron acceptors A0, A1 and FX. PSI is a plastocyanin/cytochrome c6-ferredoxin oxidoreductase, converting photonic excitation into a charge separation, which transfers an electron from the donor P700 chlorophyll pair to the spectroscopically characterized acceptors A0, A1, FX, FA and FB in turn. Oxidized P700 is reduced on the lumenal side of the thylakoid membrane by plastocyanin or cytochrome c6. The chain is Photosystem I P700 chlorophyll a apoprotein A1 from Prochlorococcus marinus (strain MIT 9313).